Consider the following 353-residue polypeptide: COMPASS component SPP1 (353 aa).

The PHD-type zinc finger occupies 22–72 (DVYCICKRPDYGELMVGCDGCDDWFHFTCLHIPEQFKDLVFSFYCPYCQAG). Residues cysteine 25, cysteine 27, cysteine 39, cysteine 42, histidine 47, cysteine 50, cysteine 66, and cysteine 69 each coordinate Zn(2+). Residues 83–124 (NGEGSLPKTLWKRKCRISDCYKPCLQDSKYCSEEHGREFVND) are non coventional C3H-type zinc finger. The residue at position 87 (serine 87) is a Phosphoserine. Zn(2+)-binding residues include cysteine 97, cysteine 102, cysteine 113, and histidine 117. Over residues 235-244 (VECGKEDSKG) the composition is skewed to basic and acidic residues. The tract at residues 235 to 255 (VECGKEDSKGTKRKKKKNSSR) is disordered. Basic residues predominate over residues 245-255 (TKRKKKKNSSR).

In terms of assembly, component of the Set1C/COMPASS complex which consists of SET1(2), BRE2(2), SPP1(2), SDC1(1), SHG1(1), SWD1(1), SWD2(1), and SWD3(1).

It localises to the nucleus. In terms of biological role, component of the Set1C/COMPASS complex that specifically mono-, di- and trimethylates histone H3 to form H3K4me1/2/3, which subsequently plays a role in telomere length maintenance and transcription elongation regulation. COMPASS recognizes ubiquitinated H2B on one face of the nucleosome which stimulates the methylation of H3 on the opposing face. SPP1/CPS40 can recognize methylated histone lysine residue H3K4me3 or unmethylated H3K4. Stimulates the RNA binding activity of SET1. The protein is COMPASS component SPP1 of Saccharomyces cerevisiae (strain ATCC 204508 / S288c) (Baker's yeast).